Consider the following 734-residue polypeptide: MALRFPRFSQGLAQDPTTRRIWFGIATAHDFESHDDITEERLYQNIFASHFGQLAIIFLWTSGNLFHVAWQGNFESWVQDPLHVRPIAHAIWDPHFGQPAVEAFTRGGALGPVNIAYSGVYQWWYTIGLRTNEDLYTGALFLLFLSAISLIAGWLHLQPKWKPSVSWFKNAESRLNHHLSGLFGVSSLAWTGHLVHVAIPASRGESVRWNNFLDVLPHPQGLGPLFTGQWNLYAQNPDSSSHLFGTAEGAGTAILTLLGGFHPQTQSLWLTDIAHHHLAIAFIFLVAGHMYRTNFGIGHSMKDLLDAHIPPGGRLGRGHKGLYDTINNSLHFQLGLALASLGVITSLVAQHMYSLPAYAFIAQDFTTQAALYTHHQYIAGFIMTGAFAHGAILVIRDYNPEQNEDNVLARMLDHKEAIISHLSWASLFLGFHTLGLYVHNDVMLAFGTPEKQILIEPIFAQWIQSAHGKTSYGFDVLLSSTSGPAFNAGRSIWLPGWLNAVNENSNSLFLTIGPGDFLVHHAIALGLHTTTLILVKGALDARGSKLMPDKKDFGYSFPCDGPGRGGTCDISAWDAFYLAVFWMLNTIGWVTFYWHWKHITLWQGNVSQFNESSTYLMGWLRDYLWLNSSQLINGYNPFGMNSLSVWAWMFLFGHLVWATGFMFLISWRGYWQELIETLAWAHERTPLANLIRWRDKPVALSIVQARLVGLAHFSVGYIFTYAAFLIASTSGKFG.

8 helical membrane-spanning segments follow: residues 46-69 (IFAS…FHVA), 135-158 (LYTG…LHLQ), 175-199 (LNHH…HVAI), 273-291 (IAHH…GHMY), 330-353 (LHFQ…QHMY), 369-395 (AALY…ILVI), 417-439 (AIIS…LYVH), and 517-535 (FLVH…LILV). Positions 559 and 568 each coordinate [4Fe-4S] cluster. The next 2 membrane-spanning stretches (helical) occupy residues 575 to 596 (AFYL…YWHW) and 643 to 665 (LSVW…MFLI). Chlorophyll a-binding residues include histidine 654, methionine 662, and tyrosine 670. Tryptophan 671 provides a ligand contact to phylloquinone. Residues 707-727 (LVGLAHFSVGYIFTYAAFLIA) form a helical membrane-spanning segment.

Belongs to the PsaA/PsaB family. As to quaternary structure, the PsaA/B heterodimer binds the P700 chlorophyll special pair and subsequent electron acceptors. PSI consists of a core antenna complex that captures photons, and an electron transfer chain that converts photonic excitation into a charge separation. The eukaryotic PSI reaction center is composed of at least 11 subunits. The cofactor is P700 is a chlorophyll a/chlorophyll a' dimer, A0 is one or more chlorophyll a, A1 is one or both phylloquinones and FX is a shared 4Fe-4S iron-sulfur center..

It localises to the plastid. The protein resides in the chloroplast thylakoid membrane. It carries out the reaction reduced [plastocyanin] + hnu + oxidized [2Fe-2S]-[ferredoxin] = oxidized [plastocyanin] + reduced [2Fe-2S]-[ferredoxin]. PsaA and PsaB bind P700, the primary electron donor of photosystem I (PSI), as well as the electron acceptors A0, A1 and FX. PSI is a plastocyanin-ferredoxin oxidoreductase, converting photonic excitation into a charge separation, which transfers an electron from the donor P700 chlorophyll pair to the spectroscopically characterized acceptors A0, A1, FX, FA and FB in turn. Oxidized P700 is reduced on the lumenal side of the thylakoid membrane by plastocyanin. The chain is Photosystem I P700 chlorophyll a apoprotein A2 from Atropa belladonna (Belladonna).